The following is a 601-amino-acid chain: NAD(+)--arginine ADP-ribosyltransferase Chelt (601 aa).

The signal sequence occupies residues 1–18 (MKTIISLIFIMFPLFVSA). NAD(+)-binding positions include 26–43 (ADSR…LYPR) and E130. E130 is an active-site residue. Cysteines 205 and 220 form a disulfide.

This sequence belongs to the enterotoxin A family.

Its subcellular location is the secreted. The enzyme catalyses L-arginyl-[protein] + NAD(+) = N(omega)-(ADP-D-ribosyl)-L-arginyl-[protein] + nicotinamide + H(+). Functionally, a probable mono(ADP-ribosyl)transferase, it may ADP-ribosylate Arg in target protein(s). Upon expression in yeast cells causes cell death. The chain is NAD(+)--arginine ADP-ribosyltransferase Chelt from Vibrio cholerae.